Here is a 335-residue protein sequence, read N- to C-terminus: Capsular polysaccharide phosphotransferase WcwK (335 aa).

This sequence belongs to the stealth family.

This Streptococcus pneumoniae protein is Capsular polysaccharide phosphotransferase WcwK (wcwK).